Here is a 142-residue protein sequence, read N- to C-terminus: Large ribosomal subunit protein uL11 (142 aa).

Belongs to the universal ribosomal protein uL11 family. Part of the ribosomal stalk of the 50S ribosomal subunit. Interacts with L10 and the large rRNA to form the base of the stalk. L10 forms an elongated spine to which L12 dimers bind in a sequential fashion forming a multimeric L10(L12)X complex. Post-translationally, one or more lysine residues are methylated.

In terms of biological role, forms part of the ribosomal stalk which helps the ribosome interact with GTP-bound translation factors. This chain is Large ribosomal subunit protein uL11, found in Colwellia psychrerythraea (strain 34H / ATCC BAA-681) (Vibrio psychroerythus).